Consider the following 611-residue polypeptide: U-box domain-containing protein 12 (611 aa).

The region spanning 227 to 301 (IIPDEFRCPI…SQWCEANGIE (75 aa)) is the U-box domain. 4 ARM repeats span residues 355–394 (VNNR…NLSI), 396–435 (ENNK…SLSV), 437–476 (DENK…NLCI), and 478–517 (QGNK…ILAG).

The catalysed reaction is S-ubiquitinyl-[E2 ubiquitin-conjugating enzyme]-L-cysteine + [acceptor protein]-L-lysine = [E2 ubiquitin-conjugating enzyme]-L-cysteine + N(6)-ubiquitinyl-[acceptor protein]-L-lysine.. It functions in the pathway protein modification; protein ubiquitination. Functionally, possesses E3 ubiquitin-protein ligase in vitro. This chain is U-box domain-containing protein 12 (PUB12), found in Oryza sativa subsp. japonica (Rice).